Consider the following 110-residue polypeptide: uncharacterized protein (110 aa).

Belongs to the RuBisCO large chain family.

It is found in the mitochondrion. This is an uncharacterized protein from Arabidopsis thaliana (Mouse-ear cress).